A 443-amino-acid chain; its full sequence is Glucose-6-phosphate isomerase (443 aa).

E285 functions as the Proton donor in the catalytic mechanism. Active-site residues include H306 and K420.

Belongs to the GPI family.

The protein localises to the cytoplasm. It catalyses the reaction alpha-D-glucose 6-phosphate = beta-D-fructose 6-phosphate. It participates in carbohydrate biosynthesis; gluconeogenesis. It functions in the pathway carbohydrate degradation; glycolysis; D-glyceraldehyde 3-phosphate and glycerone phosphate from D-glucose: step 2/4. Catalyzes the reversible isomerization of glucose-6-phosphate to fructose-6-phosphate. The protein is Glucose-6-phosphate isomerase of Staphylococcus saprophyticus subsp. saprophyticus (strain ATCC 15305 / DSM 20229 / NCIMB 8711 / NCTC 7292 / S-41).